Reading from the N-terminus, the 283-residue chain is uncharacterized protein (283 aa).

Positions 1–21 (MKLKLKFLLISLLGSSLLLSA) are cleaved as a signal peptide. Cys22 carries N-palmitoyl cysteine lipidation. Cys22 carries the S-diacylglycerol cysteine lipid modification.

It belongs to the MG439/MG440 family.

Its subcellular location is the cell membrane. This is an uncharacterized protein from Mycoplasma pneumoniae (strain ATCC 29342 / M129 / Subtype 1) (Mycoplasmoides pneumoniae).